The sequence spans 386 residues: Enamidase (386 aa).

3 residues coordinate Zn(2+): H67, H69, and E164. 3 residues coordinate Fe cation: E164, H193, and H220. D276 lines the Zn(2+) pocket.

Homotetramer. Dimer of dimers. The cofactor is Fe cation. It depends on Zn(2+) as a cofactor.

The catalysed reaction is 1,4,5,6-tetrahydro-6-oxonicotinate + 2 H2O = 2-formylglutarate + NH4(+). It functions in the pathway cofactor degradation; nicotinate degradation; propanoate and pyruvate from 6-hydroxynicotinate: step 2/8. In terms of biological role, decyclization of 6-oxo-1,4,5,6-tetrahydronicotinate to form 2-(enamine)glutarate, followed by hydrolysis to form (S)-2-formylglutarate. The chain is Enamidase from Eubacterium barkeri (Clostridium barkeri).